Reading from the N-terminus, the 145-residue chain is Transcriptional regulator SlyA (145 aa).

The region spanning 2 to 135 (ELPLGSDLAR…LALLVARLEK (134 aa)) is the HTH marR-type domain. A DNA-binding region (H-T-H motif) is located at residues 49-72 (QIQLAKAIGIEQPSLVRTLDQLEE).

Belongs to the SlyA family. In terms of assembly, homodimer.

Functionally, transcription regulator that can specifically activate or repress expression of target genes. The sequence is that of Transcriptional regulator SlyA from Pectobacterium atrosepticum (strain SCRI 1043 / ATCC BAA-672) (Erwinia carotovora subsp. atroseptica).